The primary structure comprises 200 residues: Nucleoplasmin (200 aa).

Position 2 is an N-acetylalanine (Ala-2). Ser-3 is subject to Phosphoserine. Residue Thr-4 is modified to Phosphothreonine. Phosphoserine is present on Ser-6. A Phosphothreonine modification is found at Thr-8. An acidic tract A1 region spans residues 35 to 39 (EDDEE). Acidic residues predominate over residues 123–148 (DYSWAEEEDEGEAEGEEEEEEEEDQE). The disordered stretch occupies residues 123 to 200 (DYSWAEEEDE…GRGRKPAAKK (78 aa)). The tract at residues 128-148 (EEEDEGEAEGEEEEEEEEDQE) is acidic tract A2. Ser-149 is subject to Phosphoserine. Basic residues predominate over residues 153–170 (AVKRPAATKKAGQAKKKK). The Bipartite nuclear localization signal signature appears at 155–170 (KRPAATKKAGQAKKKK). The acidic tract A3 stretch occupies residues 174-176 (EDE). 3 positions are modified to phosphoserine: Ser-177, Ser-178, and Ser-182. Basic residues predominate over residues 185-200 (KKGKGAGRGRKPAAKK). Arg-192 is subject to Omega-N-methylarginine; by PRMT5; alternate. Arg-192 is subject to Symmetric dimethylarginine; by PRMT5; alternate.

This sequence belongs to the nucleoplasmin family. Homopentamer, when bound to H2A-H2B dimers only. Homodecamer of two stacked pentamers, when bound to H2A-H2B dimers and H3-H4 tetramers simultaneously. Interacts with the heterotetramer formed by wdr77 and prmt5. Post-translationally, activated by phosphorylation of multiple serine/threonine residues, along both core and tail domains. The level of phosphorylation gradually increases during egg maturation, reaching an average of 7-10 phosphates per monomer, so that at the time of fertilization the activity of the protein is maximum. Methylated by prmt5, yielding both monomethylated and symmetrically dimethylated Arg-192.

The protein resides in the nucleus. Functionally, acts as a chaperone for histones, such as histone H2A-H2B, and thus regulates the assembly of nucleosome cores. Involved in chromatin remodeling, especially during fertilization and early embryonic development. May be involved in sperm chromatin decondensation during fertilization. The polypeptide is Nucleoplasmin (Xenopus laevis (African clawed frog)).